Here is a 475-residue protein sequence, read N- to C-terminus: Ankyrin repeat, SAM and basic leucine zipper domain-containing protein 1 (475 aa).

The segment at 1–24 (MAGSLGNLVVAGGGESSDSEEDYW) is disordered. 3 positions are modified to phosphoserine: Ser-16, Ser-17, and Ser-19. ANK repeat units follow at residues 44-73 (ERDE…SVES), 77-106 (FGWT…NASF), 109-146 (DQYT…VACR), 147-176 (KCMT…EINA), 180-209 (NGYT…NKTI), and 213-242 (DGKT…PLQG). The SAM domain maps to 273-336 (TAFGDLEVFL…LDAVKELQVE (64 aa)).

As to quaternary structure, interacts with DDX4, PIWIL1, RANBP9 and TDRD1.

The protein localises to the cytoplasm. In terms of biological role, plays a central role during spermatogenesis by repressing transposable elements and preventing their mobilization, which is essential for the germline integrity. Acts via the piRNA metabolic process, which mediates the repression of transposable elements during meiosis by forming complexes composed of piRNAs and Piwi proteins and governs the methylation and subsequent repression of transposons. Its association with pi-bodies suggests a participation in the primary piRNAs metabolic process. Required prior to the pachytene stage to facilitate the production of multiple types of piRNAs, including those associated with repeats involved in the regulation of retrotransposons. May act by mediating protein-protein interactions during germ cell maturation. This Notamacropus eugenii (Tammar wallaby) protein is Ankyrin repeat, SAM and basic leucine zipper domain-containing protein 1 (ASZ1).